The primary structure comprises 265 residues: Hydroxyethylthiazole kinase (265 aa).

M50 lines the substrate pocket. ATP-binding residues include R125 and T171. G198 contacts substrate.

Belongs to the Thz kinase family. Requires Mg(2+) as cofactor.

It carries out the reaction 5-(2-hydroxyethyl)-4-methylthiazole + ATP = 4-methyl-5-(2-phosphooxyethyl)-thiazole + ADP + H(+). Its pathway is cofactor biosynthesis; thiamine diphosphate biosynthesis; 4-methyl-5-(2-phosphoethyl)-thiazole from 5-(2-hydroxyethyl)-4-methylthiazole: step 1/1. Functionally, catalyzes the phosphorylation of the hydroxyl group of 4-methyl-5-beta-hydroxyethylthiazole (THZ). The chain is Hydroxyethylthiazole kinase from Salmonella agona (strain SL483).